The sequence spans 80 residues: Translation initiation factor IF-1, chloroplastic (80 aa).

An S1-like domain is found at 1-74; sequence MKEQKWIHEG…TRGRIIYRLR (74 aa).

This sequence belongs to the IF-1 family. In terms of assembly, component of the 30S ribosomal translation pre-initiation complex which assembles on the 30S ribosome in the order IF-2 and IF-3, IF-1 and N-formylmethionyl-tRNA(fMet); mRNA recruitment can occur at any time during PIC assembly.

Its subcellular location is the plastid. The protein localises to the chloroplast. Its function is as follows. One of the essential components for the initiation of protein synthesis. Stabilizes the binding of IF-2 and IF-3 on the 30S subunit to which N-formylmethionyl-tRNA(fMet) subsequently binds. Helps modulate mRNA selection, yielding the 30S pre-initiation complex (PIC). Upon addition of the 50S ribosomal subunit IF-1, IF-2 and IF-3 are released leaving the mature 70S translation initiation complex. This chain is Translation initiation factor IF-1, chloroplastic, found in Illicium oligandrum (Star anise).